The sequence spans 2248 residues: Zinc finger protein lin-13 (2248 aa).

The disordered stretch occupies residues 1–189; the sequence is MDEFELFQQL…TYASQYSRPP (189 aa). A compositionally biased stretch (polar residues) spans 29-38; the sequence is QQANNNQSAP. Positions 54–92 are enriched in basic and acidic residues; that stretch reads KQREEEEAQRLADFMQKDMKEPAVKRKRGSEEYKKDPLE. The span at 145–155 shows a compositional bias: acidic residues; the sequence is ELDENYMEENE. The short motif at 440–444 is the Required for interaction with hpl-2 isoform a element; sequence PLVPV. The C2H2-type 1 zinc finger occupies 503–525; sequence HTCIKCGKTFGTEFMLKHHAQSH. Positions 603–665 are disordered; sequence KTKKENRNIT…FTSSKQKKKR (63 aa). Residues 605–620 show a composition bias toward basic and acidic residues; that stretch reads KKENRNITDSNEKEFS. C2H2-type zinc fingers lie at residues 812–837, 959–982, 1140–1162, 1556–1578, 1601–1623, and 1657–1680; these read VRCI…SDVH, YSCS…TRFH, LMCY…MDDH, FKCQ…MRDH, WLCR…MAIH, and YSCG…SVAH. Residues 1859–1877 show a composition bias toward polar residues; the sequence is PRSSLQTNGSSMGSVTTNG. A disordered region spans residues 1859–1900; sequence PRSSLQTNGSSMGSVTTNGGRVVRPSPPNSMNVTLRRAPPQQ.

In terms of assembly, interacts (via PLVPV motif) with chromobox protein homolog hpl-2 (via chromo (shadow subtype) domain); the interaction is direct and influences localization of hpl-2 to nuclear foci. In the L3 stage, expressed in syncytial hypodermal cell 7, body wall muscles, intestinal cells, distal tip cells and many neurons.

The protein resides in the nucleus. Its function is as follows. Involved in repression of vulval fate, possibly by a tumor suppressor protein Rb-mediated mechanism. May act in a common pathway with retinoblastoma-like protein homolog lin-35 and hpl-2 to influence the ER stress response in the intestine. Plays a role in recruiting chromobox protein homolog hpl-2 to specific chromatin sites. The protein is Zinc finger protein lin-13 (lin-13) of Caenorhabditis elegans.